Reading from the N-terminus, the 399-residue chain is Probable aspartate/prephenate aminotransferase (399 aa).

L-aspartate-binding residues include Gly-39, Trp-125, and Asn-175. Lys-239 is modified (N6-(pyridoxal phosphate)lysine). Arg-375 provides a ligand contact to L-aspartate.

This sequence belongs to the class-I pyridoxal-phosphate-dependent aminotransferase family. In terms of assembly, homodimer. It depends on pyridoxal 5'-phosphate as a cofactor.

The protein resides in the cytoplasm. The catalysed reaction is L-aspartate + 2-oxoglutarate = oxaloacetate + L-glutamate. The enzyme catalyses L-arogenate + 2-oxoglutarate = prephenate + L-glutamate. Functionally, catalyzes the reversible conversion of aspartate and 2-oxoglutarate to glutamate and oxaloacetate. Can also transaminate prephenate in the presence of glutamate. This chain is Probable aspartate/prephenate aminotransferase (aatA), found in Rickettsia prowazekii (strain Madrid E).